The sequence spans 256 residues: Pyridoxine 5'-phosphate synthase (256 aa).

Asparagine 10 serves as a coordination point for 3-amino-2-oxopropyl phosphate. Position 12–13 (12–13 (DH)) interacts with 1-deoxy-D-xylulose 5-phosphate. A 3-amino-2-oxopropyl phosphate-binding site is contributed by arginine 21. Histidine 46 acts as the Proton acceptor in catalysis. 1-deoxy-D-xylulose 5-phosphate is bound by residues arginine 48 and histidine 53. Catalysis depends on glutamate 73, which acts as the Proton acceptor. A 1-deoxy-D-xylulose 5-phosphate-binding site is contributed by threonine 103. Histidine 193 (proton donor) is an active-site residue. 3-amino-2-oxopropyl phosphate is bound by residues glycine 194 and 215–216 (GH).

Belongs to the PNP synthase family. In terms of assembly, homooctamer; tetramer of dimers.

It is found in the cytoplasm. The catalysed reaction is 3-amino-2-oxopropyl phosphate + 1-deoxy-D-xylulose 5-phosphate = pyridoxine 5'-phosphate + phosphate + 2 H2O + H(+). The protein operates within cofactor biosynthesis; pyridoxine 5'-phosphate biosynthesis; pyridoxine 5'-phosphate from D-erythrose 4-phosphate: step 5/5. Catalyzes the complicated ring closure reaction between the two acyclic compounds 1-deoxy-D-xylulose-5-phosphate (DXP) and 3-amino-2-oxopropyl phosphate (1-amino-acetone-3-phosphate or AAP) to form pyridoxine 5'-phosphate (PNP) and inorganic phosphate. This Zymomonas mobilis subsp. mobilis (strain ATCC 31821 / ZM4 / CP4) protein is Pyridoxine 5'-phosphate synthase.